Reading from the N-terminus, the 466-residue chain is Ribulose bisphosphate carboxylase large chain (466 aa).

N6,N6,N6-trimethyllysine is present on lysine 4. Residues asparagine 113 and threonine 163 each contribute to the substrate site. The Proton acceptor role is filled by lysine 165. Lysine 167 lines the substrate pocket. Mg(2+) contacts are provided by lysine 191, aspartate 193, and glutamate 194. An N6-carboxylysine modification is found at lysine 191. The Proton acceptor role is filled by histidine 284. Substrate-binding residues include arginine 285, histidine 317, and serine 369.

Belongs to the RuBisCO large chain family. Type I subfamily. In terms of assembly, heterohexadecamer of 8 large chains and 8 small chains; disulfide-linked. The disulfide link is formed within the large subunit homodimers. The cofactor is Mg(2+). Post-translationally, the disulfide bond which can form in the large chain dimeric partners within the hexadecamer appears to be associated with oxidative stress and protein turnover.

The protein localises to the plastid. It is found in the chloroplast. It carries out the reaction 2 (2R)-3-phosphoglycerate + 2 H(+) = D-ribulose 1,5-bisphosphate + CO2 + H2O. The catalysed reaction is D-ribulose 1,5-bisphosphate + O2 = 2-phosphoglycolate + (2R)-3-phosphoglycerate + 2 H(+). Its function is as follows. RuBisCO catalyzes two reactions: the carboxylation of D-ribulose 1,5-bisphosphate, the primary event in carbon dioxide fixation, as well as the oxidative fragmentation of the pentose substrate in the photorespiration process. Both reactions occur simultaneously and in competition at the same active site. The chain is Ribulose bisphosphate carboxylase large chain from Pinguicula caerulea (Blueflower butterwort).